A 118-amino-acid polypeptide reads, in one-letter code: Small ribosomal subunit protein uS13 (118 aa).

The interval 91-118 (HRRGLPVRGQRTKTNARTRKGPRKPIKK) is disordered.

This sequence belongs to the universal ribosomal protein uS13 family. As to quaternary structure, part of the 30S ribosomal subunit. Forms a loose heterodimer with protein S19. Forms two bridges to the 50S subunit in the 70S ribosome.

Its function is as follows. Located at the top of the head of the 30S subunit, it contacts several helices of the 16S rRNA. In the 70S ribosome it contacts the 23S rRNA (bridge B1a) and protein L5 of the 50S subunit (bridge B1b), connecting the 2 subunits; these bridges are implicated in subunit movement. Contacts the tRNAs in the A and P-sites. In Photorhabdus laumondii subsp. laumondii (strain DSM 15139 / CIP 105565 / TT01) (Photorhabdus luminescens subsp. laumondii), this protein is Small ribosomal subunit protein uS13.